Reading from the N-terminus, the 85-residue chain is Small ribosomal subunit protein bS16 (85 aa).

This sequence belongs to the bacterial ribosomal protein bS16 family.

This chain is Small ribosomal subunit protein bS16, found in Metamycoplasma arthritidis (strain 158L3-1) (Mycoplasma arthritidis).